The sequence spans 350 residues: tRNA uridine(34) hydroxylase (350 aa).

The Rhodanese domain maps to 146–240; it reads DDPDALFIDM…YARKAREQGL (95 aa). Catalysis depends on Cys-200, which acts as the Cysteine persulfide intermediate.

Belongs to the TrhO family.

The catalysed reaction is uridine(34) in tRNA + AH2 + O2 = 5-hydroxyuridine(34) in tRNA + A + H2O. Its function is as follows. Catalyzes oxygen-dependent 5-hydroxyuridine (ho5U) modification at position 34 in tRNAs, the first step in 5-carboxymethoxyuridine (cmo5U) biosynthesis. May be part of an alternate pathway, which is able to bypass cmo5U biogenesis in a subset of tRNAs under aerobic conditions. The protein is tRNA uridine(34) hydroxylase of Escherichia coli O127:H6 (strain E2348/69 / EPEC).